Here is a 312-residue protein sequence, read N- to C-terminus: Terpene synthase 8 (312 aa).

A DDxx(x)D/E motif motif is present at residues 96 to 101 (DDYIYE). Residues 224-232 (NDCGSFKME) carry the NDxxSxxxD/E motif motif.

The protein belongs to the terpene synthase family.

The catalysed reaction is (2E,6E)-farnesyl diphosphate + H2O = discoidol + diphosphate. Its pathway is sesquiterpene biosynthesis. Functionally, terpene synthase; part of the gene cluster that mediates the biosynthesis of the trisnorsesquiterpene discodiene which has a function during later stages of multicellular development, during the transition from fingers to Mexican hats. The terpene synthase tps8 converts its substrate farnesyl diphosphate (FDP) into the bicyclic sesquiterpene alcohol discoidol. The cytochrome P450 monooxygenase cyp521A1 then catalyzes the oxidative degradation of discoidol to form the trisnorsesquiterpene discodiene. This Dictyostelium discoideum (Social amoeba) protein is Terpene synthase 8.